The chain runs to 316 residues: tRNA methyltransferase 10 homolog B (316 aa).

The stretch at 73–97 (EKIVAAKKSKRKQEKERRKANRAEN) forms a coiled coil. The disordered stretch occupies residues 77–98 (AAKKSKRKQEKERRKANRAENP). The region spanning 113 to 310 (TKDKLLEAKH…KGVSSGKGYI (198 aa)) is the SAM-dependent MTase TRM10-type domain.

It belongs to the class IV-like SAM-binding methyltransferase superfamily. TRM10 family.

The enzyme catalyses guanosine(9) in tRNA + S-adenosyl-L-methionine = N(1)-methylguanosine(9) in tRNA + S-adenosyl-L-homocysteine + H(+). Functionally, S-adenosyl-L-methionine-dependent guanine N(1)-methyltransferase that catalyzes the formation of N(1)-methylguanine at position 9 (m1G9) in tRNAs. Probably not able to catalyze formation of N(1)-methyladenine at position 9 (m1A9) in tRNAs. The protein is tRNA methyltransferase 10 homolog B (TRMT10B) of Homo sapiens (Human).